The sequence spans 118 residues: MSRHSRLQRQVLSLYRELLRAGRGKPGAEARVRAEFRQHACLPRSDVLRIEYLYRRGRRQLQMLRSGHATAMGAFVRTRGPTEESNGAGAPGTLSGEGDDPRKPLDSMRTPKTPLDGR.

The short motif at 14-16 (LYR) is the LYR motif 1; required for interaction with HSC20 element. Positions 53–55 (LYR) match the LYR motif 2; not required for interaction with HSC20 motif. Positions 53-65 (LYRRGRRQLQMLR) are interaction with SDHB. The disordered stretch occupies residues 72–118 (MGAFVRTRGPTEESNGAGAPGTLSGEGDDPRKPLDSMRTPKTPLDGR).

This sequence belongs to the complex I LYR family. SDHAF1 subfamily. As to quaternary structure, interacts with SDHB within an SDHA-SDHB subcomplex. Also interacts with the iron-sulfur transfer complex formed by HSC20, HSPA9 and ISCU through direct binding to HSC20. Binding of SDHAF1 to SDHB precedes and is necessary for recruitment of the iron-sulfur transfer complex by SDHAF1.

The protein localises to the mitochondrion matrix. Its function is as follows. Plays an essential role in the assembly of succinate dehydrogenase (SDH), an enzyme complex (also referred to as respiratory complex II) that is a component of both the tricarboxylic acid (TCA) cycle and the mitochondrial electron transport chain, and which couples the oxidation of succinate to fumarate with the reduction of ubiquinone (coenzyme Q) to ubiquinol. Promotes maturation of the iron-sulfur protein subunit SDHB of the SDH catalytic dimer, protecting it from the deleterious effects of oxidants. May act together with SDHAF3. Contributes to iron-sulfur cluster incorporation into SDHB by binding to SDHB and recruiting the iron-sulfur transfer complex formed by HSC20, HSPA9 and ISCU through direct binding to HSC20. The polypeptide is Succinate dehydrogenase assembly factor 1, mitochondrial (Bos taurus (Bovine)).